Reading from the N-terminus, the 254-residue chain is Ciliary microtubule associated protein 1A (254 aa).

STPGR repeat units lie at residues 180 to 205 (PGPAAYRQTDVRVTKFKAPQYTMAAR) and 216 to 241 (PGPGAHSPEKVTLTKPCAPVVTFGIK). The tract at residues 207-226 (EPPGDKTLKPGPGAHSPEKV) is disordered.

The protein belongs to the CIMAP family. Microtubule inner protein component of sperm flagellar doublet microtubules. In terms of tissue distribution, testis-specific.

The protein resides in the cytoplasm. Its subcellular location is the cytoskeleton. It is found in the flagellum axoneme. In terms of biological role, outer dense fibers are filamentous structures located on the outside of the axoneme in the midpiece and principal piece of the mammalian sperm tail. May help to maintain the passive elastic structures and elastic recoil of the sperm tail. In Homo sapiens (Human), this protein is Ciliary microtubule associated protein 1A.